We begin with the raw amino-acid sequence, 122 residues long: Large ribosomal subunit protein uL14 (122 aa).

It belongs to the universal ribosomal protein uL14 family. Part of the 50S ribosomal subunit. Forms a cluster with proteins L3 and L19. In the 70S ribosome, L14 and L19 interact and together make contacts with the 16S rRNA in bridges B5 and B8.

Functionally, binds to 23S rRNA. Forms part of two intersubunit bridges in the 70S ribosome. The sequence is that of Large ribosomal subunit protein uL14 from Verminephrobacter eiseniae (strain EF01-2).